We begin with the raw amino-acid sequence, 211 residues long: uncharacterized protein (211 aa).

A signal peptide spans 1–27; it reads MKRTSAALVVFLILLFLGLLFLPMFIV.

This is an uncharacterized protein from Archaeoglobus fulgidus (strain ATCC 49558 / DSM 4304 / JCM 9628 / NBRC 100126 / VC-16).